A 915-amino-acid polypeptide reads, in one-letter code: Transferrin-binding protein A (915 aa).

A signal peptide spans Met1–Ala24. At Glu25–Gln187 the chain is on the periplasmic side. The short motif at Asp38 to Lys45 is the TonB box element. The region spanning Arg51–Lys176 is the TBDR plug domain. The tract at residues Ser121–Ala139 is plug loop, interacts with transferrin. The 729-residue stretch at Gln187–Phe915 folds into the TBDR beta-barrel domain. The beta stranded transmembrane segment at Trp188–Ser197 threads the bilayer. Topologically, residues Gly198–Leu203 are extracellular. A beta stranded membrane pass occupies residues Thr204–Ile213. At Gly214–Gly215 the chain is on the periplasmic side. Residues Ala216 to Arg225 traverse the membrane as a beta stranded segment. Over Arg226–Ser309 the chain is Extracellular. Residues Arg310–Arg319 form a beta stranded membrane-spanning segment. At Phe320–Arg324 the chain is on the periplasmic side. A beta stranded membrane pass occupies residues His325–Thr334. Over Gln335–Ser406 the chain is Extracellular. The segment at Lys351–Ala361 is L3 helix finger, interacts with transferrin. A beta stranded transmembrane segment spans residues Arg407–Thr415. The Periplasmic portion of the chain corresponds to Asn416–Ala423. The beta stranded transmembrane segment at Asp424 to Gln433 threads the bilayer. At Gly434–Arg478 the chain is on the extracellular side. The chain crosses the membrane as a beta stranded span at residues Leu479–Phe488. The Periplasmic portion of the chain corresponds to Asp489–Arg494. Residues His495 to Asp504 traverse the membrane as a beta stranded segment. The Extracellular portion of the chain corresponds to Arg505 to Tyr583. Residues Ala523–Ser542 are disordered. The chain crosses the membrane as a beta stranded span at residues Ala584–Leu592. Topologically, residues Gly593 to Arg594 are periplasmic. Residues Trp595–Arg603 traverse the membrane as a beta stranded segment. At Tyr604–Thr623 the chain is on the extracellular side. Residues Leu624–Lys633 traverse the membrane as a beta stranded segment. The Periplasmic segment spans residues Pro634 to Trp637. A beta stranded membrane pass occupies residues Leu638–Gly647. Residues Phe648–Ser675 are Extracellular-facing. A beta stranded membrane pass occupies residues Phe676–Lys685. Topologically, residues Gly686–Gly689 are periplasmic. A beta stranded transmembrane segment spans residues Asn690 to Ala699. Topologically, residues Tyr700–Ile733 are extracellular. Residues Thr734 to Asp743 form a beta stranded membrane-spanning segment. The Periplasmic segment spans residues Trp744–Trp755. A beta stranded transmembrane segment spans residues Tyr756–Arg765. Topologically, residues Val766–Arg790 are extracellular. The chain crosses the membrane as a beta stranded span at residues Tyr791–Gln799. The Periplasmic portion of the chain corresponds to Pro800–Gly802. A beta stranded transmembrane segment spans residues Lys803 to Thr811. Over Tyr812–Trp845 the chain is Extracellular. A beta stranded membrane pass occupies residues Tyr846–Thr855. Over Val856–Phe860 the chain is Periplasmic. A beta stranded membrane pass occupies residues Thr861–Leu870. Residues Asn871–Arg905 lie on the Extracellular side of the membrane. A TonB C-terminal box motif is present at residues Asn898 to Phe915. Residues Asn906–Phe915 traverse the membrane as a beta stranded segment.

The protein belongs to the TonB-dependent receptor family. In terms of assembly, binds both human apo- and holo-transferrin (TF), via the TF C-terminus. Forms a large complex with TF and TbpB.

It is found in the cell outer membrane. In terms of biological role, neisseria acquires iron by extracting it from serum transferrin (TF) in its human host. Acts as a TF receptor and is required for TF utilization. Binds both apo- and holo-TF, via the TF C-terminus. The chain is Transferrin-binding protein A from Neisseria meningitidis serogroup B (strain ATCC BAA-335 / MC58).